Consider the following 296-residue polypeptide: uncharacterized protein (296 aa).

A run of 2 helical transmembrane segments spans residues 82–102 (VVAPLPVVIHAGAMSILWSVQ) and 117–137 (ISVLALVLLGSLGIGVLSAIF).

Its subcellular location is the cell membrane. This is an uncharacterized protein from Sinorhizobium fredii (strain NBRC 101917 / NGR234).